The chain runs to 122 residues: Putative iron-sulfur cluster insertion protein ErpA (122 aa).

3 residues coordinate iron-sulfur cluster: Cys-50, Cys-114, and Cys-116.

Belongs to the HesB/IscA family. In terms of assembly, homodimer. Requires iron-sulfur cluster as cofactor.

Its function is as follows. Required for insertion of 4Fe-4S clusters. The polypeptide is Putative iron-sulfur cluster insertion protein ErpA (Cupriavidus necator (strain ATCC 17699 / DSM 428 / KCTC 22496 / NCIMB 10442 / H16 / Stanier 337) (Ralstonia eutropha)).